The following is a 455-amino-acid chain: Post-transcriptional regulator MTA (455 aa).

The interval 17–163 (DSVSSSEFDE…QVNCQRQDDD (147 aa)) is disordered. Residues 23–42 (EFDESRDDETDAPTLEDEQL) are compositionally biased toward acidic residues. Residues 88 to 98 (SPLSRPRSPSP) are compositionally biased toward low complexity. 3 short sequence motifs (nuclear localization signal) span residues 101-107 (RYGKKIK), 121-130 (KRPRRRPRDR), and 143-152 (RAAPKRATRR). Residues cysteine 333, histidine 423, cysteine 427, and cysteine 432 each contribute to the Zn(2+) site. A CHC2-type zinc finger spans residues 333 to 432 (CVFDKQSELA…HHSLCRNSEC (100 aa)).

The protein belongs to the HHV-1 ICP27 protein family. Homodimer. Homodimerization is required for transactivation. Interacts with host ALYREF. Associates in a complex with RNA, and host export factors NXF1/TAP and ALYREF; these interactions allow nuclear export of viral transcripts. Interacts with protein K-bZIP/K8; this interaction promotes viral gene expression during lytic infection. Interacts with host PABPC1. Interacts with host AGO2 and TNRC6A; these interactions inhibit host P-body formation. Interacts with PRKRA and EIF2AK2/PKR; these interactions inhibit host stress granule formation. Proteolytically cleaved by host caspase-7 (CASP7), leading to its inactivation, thereby preventing expression of viral lytic genes.

It is found in the host cytoplasm. The protein localises to the host nucleus. In terms of biological role, post-transcriptional regulator that plays an essential role in the expression of viral lytic genes and productive viral replication. Possesses numerous activities that promote the expression of viral genes including enhancement of RNA stability, promotion of RNA splicing and stimulation of protein translation often via its ability to interact with different cellular cofactors. Stabilizes polyadenylated nuclear (PAN) RNA by cooperative binding to a 9-nt core of the MRE (MTA responsive element) together with host PABPC1. Functions as a viral splicing factor and promotes expression of intron-containing viral lytic genes. Protects viral transcripts from specific nuclear RNA decay pathways by preventing host MTREX recruitment that promotes unwinding and degradation of structured RNA substrates. Plays a role in the inhibition of host P-body formation by altering the scaffolding activity of TNRC6A at the initial stage thereby enhancing virus production. Also inhibits host stress granule formation by blocking autophosphorylation of EIF2AK2/PKR and its subsequent binding to dsRNA. In Human herpesvirus 8 type P (isolate GK18) (HHV-8), this protein is Post-transcriptional regulator MTA.